Here is a 593-residue protein sequence, read N- to C-terminus: Uroporphyrinogen-III C-methyltransferase (593 aa).

The tract at residues 278–303 is disordered; that stretch reads ETSSSPNKKTKQETVTEGVVPPTDEN.

It belongs to the precorrin methyltransferase family.

It catalyses the reaction uroporphyrinogen III + 2 S-adenosyl-L-methionine = precorrin-2 + 2 S-adenosyl-L-homocysteine + H(+). Siroheme synthase involved in methionine biosynthesis. This is Uroporphyrinogen-III C-methyltransferase from Saccharomyces cerevisiae (strain ATCC 204508 / S288c) (Baker's yeast).